The primary structure comprises 373 residues: UDP-N-acetylglucosamine--N-acetylmuramyl-(pentapeptide) pyrophosphoryl-undecaprenol N-acetylglucosamine transferase (373 aa).

UDP-N-acetyl-alpha-D-glucosamine-binding positions include 10 to 12 (TGG), Asn-124, Ser-195, and Gln-297.

Belongs to the glycosyltransferase 28 family. MurG subfamily.

It localises to the cell membrane. It carries out the reaction Mur2Ac(oyl-L-Ala-gamma-D-Glu-L-Lys-D-Ala-D-Ala)-di-trans,octa-cis-undecaprenyl diphosphate + UDP-N-acetyl-alpha-D-glucosamine = beta-D-GlcNAc-(1-&gt;4)-Mur2Ac(oyl-L-Ala-gamma-D-Glu-L-Lys-D-Ala-D-Ala)-di-trans,octa-cis-undecaprenyl diphosphate + UDP + H(+). It functions in the pathway cell wall biogenesis; peptidoglycan biosynthesis. Functionally, cell wall formation. Catalyzes the transfer of a GlcNAc subunit on undecaprenyl-pyrophosphoryl-MurNAc-pentapeptide (lipid intermediate I) to form undecaprenyl-pyrophosphoryl-MurNAc-(pentapeptide)GlcNAc (lipid intermediate II). This is UDP-N-acetylglucosamine--N-acetylmuramyl-(pentapeptide) pyrophosphoryl-undecaprenol N-acetylglucosamine transferase from Oenococcus oeni (strain ATCC BAA-331 / PSU-1).